A 485-amino-acid polypeptide reads, in one-letter code: Probable cobyric acid synthase (485 aa).

The region spanning E250 to I435 is the GATase cobBQ-type domain. C328 functions as the Nucleophile in the catalytic mechanism. The active site involves H427.

Belongs to the CobB/CobQ family. CobQ subfamily.

Its pathway is cofactor biosynthesis; adenosylcobalamin biosynthesis. Functionally, catalyzes amidations at positions B, D, E, and G on adenosylcobyrinic A,C-diamide. NH(2) groups are provided by glutamine, and one molecule of ATP is hydrogenolyzed for each amidation. The protein is Probable cobyric acid synthase of Methanosarcina acetivorans (strain ATCC 35395 / DSM 2834 / JCM 12185 / C2A).